The following is a 983-amino-acid chain: Nuclear factor NF-kappa-B p105 subunit (983 aa).

One can recognise an RHD domain in the interval 47-372 (PYLQIIEQPK…EVQRKRQKLM (326 aa)). Cysteine 66 is modified (S-nitrosocysteine). A Phosphoserine; by PKA modification is found at serine 342. Residues 365–370 (QRKRQK) carry the Nuclear localization signal motif. The interval 377-397 (DGYGGGSGAGGGGMFGGGGGG) is GRR. A disordered region spans residues 423–454 (KSNAGMKHELSNSTVKKDEESSDKQSDKWDTK). Over residues 428–454 (MKHELSNSTVKKDEESSDKQSDKWDTK) the composition is skewed to basic and acidic residues. ANK repeat units lie at residues 540–569 (NGDNVLHLSIIHLHRELVKNLLEVMPDMNY), 579–608 (LYQTPLHLAVITKQAEVVEDLLKAGANVNL), 612–641 (HGNSVLHLAAAEGDDKILSLLLKHQKASSM), 648–677 (EGLSAIHMVVTANSLSCLKLLIAAGVDVNA), 682–712 (SGRTALHLAVEQENVPLAGCLLLEGDADVDS), 716–745 (DGTTPLHIAAGRGFTKLAAVLKAAGADPHV), and 769–799 (PGTTPLDMAANWEVYDILNGKPYIAAAAVSE). The 88-residue stretch at 804–891 (QGPLRELNES…EAIEVIQKAL (88 aa)) folds into the Death domain. The residue at position 938 (serine 938) is a Phosphoserine.

As to quaternary structure, active NF-kappa-B is a heterodimer of an about 50 kDa DNA-binding subunit and the weak DNA-binding subunit p65. Two heterodimers might form a labile tetramer. Post-translationally, generation of the NF-kappa-B p50 (Nuclear factor NF-kappa-B p50 subunit) transcription factor takes place both cotranslationally and post-translationally via non-mutually exclusive mechanisms. A cotranslational processing allows the production of both p50 and p105 (Nuclear factor NF-kappa-B p105 subunit) from a single NFKB1 mRNA. While translation occurs, the particular unfolded structure after the GRR repeat region acts as a substrate for the proteasome, promoting degradation of the C-terminus. The GRR acts as a proteasomal 'stop signal', protecting the region upstream of the GRR from degradation and promoting generation of p50. It is unclear if limited proteasome degradation during cotranslational processing depends on ubiquitination. NF-kappa-B p50 is also generated post-translationally following ubiquitination by the KPC complex, leading to limited processing by the proteasome downstream of the GRR region, thereby generating p50. Phosphorylation at the C-terminus by IKBKB/IKKB acts as a signal for ubiquitination and promotes either complete degradation or processing to generate the NF-kappa-B p50 (Nuclear factor NF-kappa-B p50 subunit). Phosphorylation at Ser-938 are required for BTRC/BTRCP-mediated ubiquitination and proteolysis. Phosphorylation at Ser-938 is also required for ubiquitination by the KPC complex and limited processing to generate NF-kappa-B p50 (Nuclear factor NF-kappa-B p50 subunit). In terms of processing, polyubiquitinated at multiple Lys residues in the C-terminus. Polyubiquitinated by the SCF(FBXW11) and SCF(BTRC) complexes following phosphorylation at Ser-938, leading to its complete degradation. In contrast, polyubiquitination by the KPC complex following phosphorylation at Ser-938 leads to limited proteosomal processing and generation of the active NF-kappa-B p50 (Nuclear factor NF-kappa-B p50 subunit). Post-translationally, S-nitrosylation of Cys-66 affects DNA binding. The covalent modification of cysteine by 15-deoxy-Delta12,14-prostaglandin-J2 is autocatalytic and reversible. It may occur as an alternative to other cysteine modifications, such as S-nitrosylation and S-palmitoylation.

It is found in the cytoplasm. The protein localises to the nucleus. Its function is as follows. P105 is the precursor of the active p50 subunit (Nuclear factor NF-kappa-B p50 subunit) of the nuclear factor NF-kappa-B. The precursor protein itself does not bind to DNA. Acts as a cytoplasmic retention of attached NF-kappa-B proteins by p105. In terms of biological role, constitutes the active form, which associates with RELA/p65 to form the NF-kappa-B p65-p50 complex to form a transcription factor. Together with RELA/p65, binds to the kappa-B consensus sequence 5'-GGRNNYYCC-3', located in the enhancer region of genes involved in immune response and acute phase reactions. This is Nuclear factor NF-kappa-B p105 subunit (NFKB1) from Gallus gallus (Chicken).